The primary structure comprises 430 residues: 3-phosphoshikimate 1-carboxyvinyltransferase (430 aa).

3-phosphoshikimate-binding residues include Lys-21, Ser-22, and Arg-26. Position 21 (Lys-21) interacts with phosphoenolpyruvate. Phosphoenolpyruvate contacts are provided by Gly-92 and Arg-120. 6 residues coordinate 3-phosphoshikimate: Ser-165, Ser-166, Gln-167, Ser-193, Asp-314, and Lys-341. Gln-167 contacts phosphoenolpyruvate. Catalysis depends on Asp-314, which acts as the Proton acceptor. The phosphoenolpyruvate site is built by Arg-345, Arg-386, and Lys-411.

The protein belongs to the EPSP synthase family. In terms of assembly, monomer.

It localises to the cytoplasm. The enzyme catalyses 3-phosphoshikimate + phosphoenolpyruvate = 5-O-(1-carboxyvinyl)-3-phosphoshikimate + phosphate. It functions in the pathway metabolic intermediate biosynthesis; chorismate biosynthesis. In terms of biological role, catalyzes the transfer of the enolpyruvyl moiety of phosphoenolpyruvate (PEP) to the 5-hydroxyl of shikimate-3-phosphate (S3P) to produce enolpyruvyl shikimate-3-phosphate and inorganic phosphate. The polypeptide is 3-phosphoshikimate 1-carboxyvinyltransferase (Methanospirillum hungatei JF-1 (strain ATCC 27890 / DSM 864 / NBRC 100397 / JF-1)).